The primary structure comprises 456 residues: RNA polymerase II-associated protein 1 homolog (456 aa).

The tract at residues 382–456 (LRSVEGSLNE…PVEQLQNEED (75 aa)) is disordered. A Phosphoserine modification is found at S388. Basic and acidic residues predominate over residues 396–406 (EEKPAESREQL). 2 stretches are compositionally biased toward polar residues: residues 408–433 (SAEQ…QANS) and 441–456 (GNTQ…NEED).

It belongs to the PAF1 family.

It localises to the cytoplasm. The protein localises to the nucleus. In Schizosaccharomyces pombe (strain 972 / ATCC 24843) (Fission yeast), this protein is RNA polymerase II-associated protein 1 homolog.